Here is a 416-residue protein sequence, read N- to C-terminus: MDKFQIHGNGPLKGEIRVSGAKNAALPILCAGLLTADTVSLDNVPNLQDVRTTLKLLRQMGMQAELDGARVTLNGADVNVLEAPYELVKTMRASILVLGPLVARFGEARVSLPGGCGIGARPVDQHIKGLQAMGAEITIEHGFIHARAKRLKGARVVTDMITVTGTENLLMAATLAEGETVLENAAREPEVTDLAQLLVKMGAKIEGIGTDRLVVQGVERLHGASHSVIADRIEAGTFLCAAAATLGDLVLRGVQPDILDTVLDKLREAGAKLETGADWIRLAMPQRAKAVSFRTSEYPAFPTDMQAQFMALNAVAEGTARVTETIFENRFMHVQELNRLGADIAVEGNTAVVNGVPRLSGANVMATDLRASASLVIAGLVADGETVIDRIYHLDRGYDRMEDKLSAVGAKIRRIA.

22 to 23 (KN) lines the phosphoenolpyruvate pocket. UDP-N-acetyl-alpha-D-glucosamine is bound at residue arginine 92. Cysteine 116 functions as the Proton donor in the catalytic mechanism. Residue cysteine 116 is modified to 2-(S-cysteinyl)pyruvic acid O-phosphothioketal. UDP-N-acetyl-alpha-D-glucosamine contacts are provided by residues 121–125 (RPVDQ), aspartate 304, and isoleucine 326.

It belongs to the EPSP synthase family. MurA subfamily.

Its subcellular location is the cytoplasm. The enzyme catalyses phosphoenolpyruvate + UDP-N-acetyl-alpha-D-glucosamine = UDP-N-acetyl-3-O-(1-carboxyvinyl)-alpha-D-glucosamine + phosphate. It functions in the pathway cell wall biogenesis; peptidoglycan biosynthesis. In terms of biological role, cell wall formation. Adds enolpyruvyl to UDP-N-acetylglucosamine. In Cupriavidus necator (strain ATCC 17699 / DSM 428 / KCTC 22496 / NCIMB 10442 / H16 / Stanier 337) (Ralstonia eutropha), this protein is UDP-N-acetylglucosamine 1-carboxyvinyltransferase.